We begin with the raw amino-acid sequence, 92 residues long: Em-like protein GEA6 (92 aa).

2 stretches are compositionally biased toward basic and acidic residues: residues 1 to 18 (MASQ…KKGE) and 37 to 51 (AEGR…KEQL). The interval 1–92 (MASQQEKKQL…IDESKFRTKT (92 aa)) is disordered.

It belongs to the small hydrophilic plant seed protein family. As to expression, present only in nearly dry and dry seeds.

In terms of biological role, it is thought to provide protection for the cytoplasm during the desiccation stage of embryo development. This is Em-like protein GEA6 (EM6) from Arabidopsis thaliana (Mouse-ear cress).